A 499-amino-acid chain; its full sequence is Probable cytosol aminopeptidase (499 aa).

Mn(2+) contacts are provided by Lys-271 and Asp-276. The active site involves Lys-283. Residues Asp-294, Asp-353, and Glu-355 each contribute to the Mn(2+) site. Residue Arg-357 is part of the active site.

Belongs to the peptidase M17 family. Mn(2+) is required as a cofactor.

It localises to the cytoplasm. It carries out the reaction Release of an N-terminal amino acid, Xaa-|-Yaa-, in which Xaa is preferably Leu, but may be other amino acids including Pro although not Arg or Lys, and Yaa may be Pro. Amino acid amides and methyl esters are also readily hydrolyzed, but rates on arylamides are exceedingly low.. The enzyme catalyses Release of an N-terminal amino acid, preferentially leucine, but not glutamic or aspartic acids.. Functionally, presumably involved in the processing and regular turnover of intracellular proteins. Catalyzes the removal of unsubstituted N-terminal amino acids from various peptides. The chain is Probable cytosol aminopeptidase from Bordetella parapertussis (strain 12822 / ATCC BAA-587 / NCTC 13253).